The primary structure comprises 209 residues: Yop proteins translocation protein K (209 aa).

Belongs to an operon involved in the translocation of Yop proteins across the bacterial membranes or in the specific control of this function. This chain is Yop proteins translocation protein K (yscK), found in Yersinia pseudotuberculosis serotype I (strain IP32953).